Consider the following 2386-residue polypeptide: Protein kinase rad3 (2386 aa).

In terms of domain architecture, FAT spans 1386 to 1943 (TLGIVSLNCG…LWQLMATIKS (558 aa)). The region spanning 2052–2370 (FEDEVDIMNS…QIQELIKSAV (319 aa)) is the PI3K/PI4K catalytic domain. The segment at 2058–2064 (IMNSLQK) is G-loop. A catalytic loop region spans residues 2227–2235 (GLGDRHGEN). The activation loop stretch occupies residues 2247–2271 (HVDFNCLFDKGLTFEKPEKVPFRLT). In terms of domain architecture, FATC spans 2354-2386 (IPLSIEGQIQELIKSAVNPKNLVEMYIGWAAYF).

This sequence belongs to the PI3/PI4-kinase family. ATM subfamily. In terms of assembly, interacts with crb2 (via BRCT domain). Interacts with chk1.

Its subcellular location is the nucleus. It carries out the reaction L-seryl-[protein] + ATP = O-phospho-L-seryl-[protein] + ADP + H(+). It catalyses the reaction L-threonyl-[protein] + ATP = O-phospho-L-threonyl-[protein] + ADP + H(+). Serine/threonine kinase which activates checkpoint signaling upon genotoxic stresses. Involved in G2 arrest following DNA damage where it phosphorylates chk1. Phosphorylation of 'Thr-73' and 'Ser-80' of checkpoint mediator crb2 promotes its interaction with chk1. It is also involved in the dependence of mitosis on the completion of DNA replication. In Schizosaccharomyces pombe (strain 972 / ATCC 24843) (Fission yeast), this protein is Protein kinase rad3 (rad3).